The following is a 192-amino-acid chain: Thymidylate kinase (192 aa).

Position 7-14 (7-14 (GIDCVGKS)) interacts with ATP.

The protein belongs to the thymidylate kinase family.

The catalysed reaction is dTMP + ATP = dTDP + ADP. Phosphorylation of dTMP to form dTDP in both de novo and salvage pathways of dTTP synthesis. The sequence is that of Thymidylate kinase (tmk) from Campylobacter jejuni subsp. jejuni serotype O:2 (strain ATCC 700819 / NCTC 11168).